The chain runs to 454 residues: Zinc finger CCCH domain-containing protein 66 (454 aa).

The segment covering 1 to 23 (MAAGAGAGGGGGEGDSNGGGTSP) has biased composition (gly residues). Residues 1–30 (MAAGAGAGGGGGEGDSNGGGTSPGGVSAAA) form a disordered region. 5 consecutive C3H1-type zinc fingers follow at residues 66–94 (RIGE…HPPN), 111–139 (RVGQ…HPRE), 157–185 (RPNE…HPQP), 318–346 (RPDQ…HPKE), and 364–392 (RPGE…HPMG). Residues 405–454 (DVSSMHYQLSPSPGHPGILLDGGSGRSHRVPQSDSQQIPSGDGNAEREAS) are disordered. The span at 434-443 (VPQSDSQQIP) shows a compositional bias: polar residues.

The polypeptide is Zinc finger CCCH domain-containing protein 66 (Oryza sativa subsp. japonica (Rice)).